Consider the following 311-residue polypeptide: Transcription factor MafB (311 aa).

Disordered stretches follow at residues 35–78 (PLGR…PTEQ) and 150–199 (EDLA…EDRF). Residues 54 to 76 (SVSSTPISTPCSSVPSSPSFSPT) are compositionally biased toward low complexity. Residues 157 to 167 (HPHHHHHHHHQ) show a composition bias toward basic residues. Over residues 168 to 194 (ASPTPSTSSSSSQQLQTSHQQHPPSSS) the composition is skewed to low complexity. The interval 226–251 (RLKQKRRTLKNRGYAQSCRYKRVQQK) is basic motif. Residues 226 to 289 (RLKQKRRTLK…DAYKLKCEKL (64 aa)) enclose the bZIP domain. The tract at residues 254–275 (LENEKTQLIQQVEQLKQEVTRL) is leucine-zipper.

Belongs to the bZIP family. Maf subfamily. In terms of assembly, homodimer or heterodimer with other bHLH-Zip transcription factors. Binds DNA as a homodimer or heterodimer. Self-associates; the interaction requires the intact MAFB leucine-zipper domain. Interacts with FOS, HOXD12 and PRRX1. Expressed in brain, thymus, gut, lung, mesenterium, spleen, kidney, ovary and bursa.

The protein localises to the nucleus. In terms of biological role, acts as a transcriptional activator or repressor. Positively regulates the expression of alpha-A crystallin genes during lens fiber cell differentiation. Binds to Maf recognition elements (MARE). The sequence is that of Transcription factor MafB (MAFB) from Gallus gallus (Chicken).